The sequence spans 485 residues: Glutamate--tRNA ligase 1 (485 aa).

The 'HIGH' region motif lies at proline 10–asparagine 20. The short motif at lysine 252–arginine 256 is the 'KMSKS' region element. Residue lysine 255 coordinates ATP.

Belongs to the class-I aminoacyl-tRNA synthetase family. Glutamate--tRNA ligase type 1 subfamily. In terms of assembly, monomer.

The protein resides in the cytoplasm. The enzyme catalyses tRNA(Glu) + L-glutamate + ATP = L-glutamyl-tRNA(Glu) + AMP + diphosphate. Catalyzes the attachment of glutamate to tRNA(Glu) in a two-step reaction: glutamate is first activated by ATP to form Glu-AMP and then transferred to the acceptor end of tRNA(Glu). The sequence is that of Glutamate--tRNA ligase 1 from Thermoanaerobacter pseudethanolicus (strain ATCC 33223 / 39E) (Clostridium thermohydrosulfuricum).